The following is a 275-amino-acid chain: Translation initiation factor 2 subunit alpha (275 aa).

Residues 12 to 83 form the S1 motif domain; it reads GEFVVATVKR…RKGHIDLSLR (72 aa).

Belongs to the eIF-2-alpha family. In terms of assembly, heterotrimer composed of an alpha, a beta and a gamma chain.

EIF-2 functions in the early steps of protein synthesis by forming a ternary complex with GTP and initiator tRNA. The chain is Translation initiation factor 2 subunit alpha (eif2a) from Pyrococcus horikoshii (strain ATCC 700860 / DSM 12428 / JCM 9974 / NBRC 100139 / OT-3).